Here is a 416-residue protein sequence, read N- to C-terminus: Multifunctional CCA protein (416 aa).

The ATP site is built by Gly-8 and Arg-11. Positions 8 and 11 each coordinate CTP. Positions 21 and 23 each coordinate Mg(2+). Residues Arg-91, Arg-137, and Arg-140 each contribute to the ATP site. 3 residues coordinate CTP: Arg-91, Arg-137, and Arg-140. Positions Thr-228–Trp-329 constitute an HD domain.

It belongs to the tRNA nucleotidyltransferase/poly(A) polymerase family. Bacterial CCA-adding enzyme type 1 subfamily. In terms of assembly, monomer. Can also form homodimers and oligomers. Mg(2+) serves as cofactor. Requires Ni(2+) as cofactor.

It carries out the reaction a tRNA precursor + 2 CTP + ATP = a tRNA with a 3' CCA end + 3 diphosphate. The catalysed reaction is a tRNA with a 3' CCA end + 2 CTP + ATP = a tRNA with a 3' CCACCA end + 3 diphosphate. Catalyzes the addition and repair of the essential 3'-terminal CCA sequence in tRNAs without using a nucleic acid template. Adds these three nucleotides in the order of C, C, and A to the tRNA nucleotide-73, using CTP and ATP as substrates and producing inorganic pyrophosphate. tRNA 3'-terminal CCA addition is required both for tRNA processing and repair. Also involved in tRNA surveillance by mediating tandem CCA addition to generate a CCACCA at the 3' terminus of unstable tRNAs. While stable tRNAs receive only 3'-terminal CCA, unstable tRNAs are marked with CCACCA and rapidly degraded. This Shewanella sp. (strain MR-4) protein is Multifunctional CCA protein.